Consider the following 166-residue polypeptide: Crossover junction endodeoxyribonuclease RuvC (166 aa).

Residues aspartate 7, glutamate 70, and histidine 143 contribute to the active site. Residues aspartate 7, glutamate 70, and histidine 143 each coordinate Mg(2+).

This sequence belongs to the RuvC family. In terms of assembly, homodimer which binds Holliday junction (HJ) DNA. The HJ becomes 2-fold symmetrical on binding to RuvC with unstacked arms; it has a different conformation from HJ DNA in complex with RuvA. In the full resolvosome a probable DNA-RuvA(4)-RuvB(12)-RuvC(2) complex forms which resolves the HJ. The cofactor is Mg(2+).

The protein resides in the cytoplasm. It catalyses the reaction Endonucleolytic cleavage at a junction such as a reciprocal single-stranded crossover between two homologous DNA duplexes (Holliday junction).. Its function is as follows. The RuvA-RuvB-RuvC complex processes Holliday junction (HJ) DNA during genetic recombination and DNA repair. Endonuclease that resolves HJ intermediates. Cleaves cruciform DNA by making single-stranded nicks across the HJ at symmetrical positions within the homologous arms, yielding a 5'-phosphate and a 3'-hydroxyl group; requires a central core of homology in the junction. The consensus cleavage sequence is 5'-(A/T)TT(C/G)-3'. Cleavage occurs on the 3'-side of the TT dinucleotide at the point of strand exchange. HJ branch migration catalyzed by RuvA-RuvB allows RuvC to scan DNA until it finds its consensus sequence, where it cleaves and resolves the cruciform DNA. The sequence is that of Crossover junction endodeoxyribonuclease RuvC from Thermus thermophilus (strain ATCC BAA-163 / DSM 7039 / HB27).